Here is a 291-residue protein sequence, read N- to C-terminus: Farnesyl diphosphate synthase (291 aa).

Isopentenyl diphosphate is bound by residues K44, R47, and H76. Mg(2+) contacts are provided by D83 and D89. R94 serves as a coordination point for (2E)-geranyl diphosphate. R95 provides a ligand contact to isopentenyl diphosphate. Residues K177, T178, Q215, and K232 each coordinate (2E)-geranyl diphosphate.

The protein belongs to the FPP/GGPP synthase family. The cofactor is Mg(2+).

It localises to the cytoplasm. The catalysed reaction is isopentenyl diphosphate + (2E)-geranyl diphosphate = (2E,6E)-farnesyl diphosphate + diphosphate. In Micrococcus luteus (Micrococcus lysodeikticus), this protein is Farnesyl diphosphate synthase (fps).